Here is a 100-residue protein sequence, read N- to C-terminus: Small ribosomal subunit protein uS14c (100 aa).

The protein belongs to the universal ribosomal protein uS14 family. In terms of assembly, part of the 30S ribosomal subunit.

Its subcellular location is the plastid. The protein localises to the chloroplast. In terms of biological role, binds 16S rRNA, required for the assembly of 30S particles. The protein is Small ribosomal subunit protein uS14c of Buxus microphylla (Littleleaf boxwood).